Here is a 502-residue protein sequence, read N- to C-terminus: MPRGCAGARFACNACLNFLAGLGISEPISPGWAAMERLSGLDAFFLYMETPSQPLNVCCVLELDTSTMPGGYTYGRFHAALEKYVKAAPEFRMKLADTELNLDHPVWVDDDNFQIRHHLRRVAMPAPGGRRELAEICGYIAGLPLDRDRPLWEMWVIEGGARSDTVAVMLKVHHAVVDGVAGANLLSHLCSLQPDAPAPQPVRGTGGGNVLQIAASGLVGFASRPVRLATVVPATVLTLVRTLLRAREGRTMAAPFSAPPTPFNGPLGRLRNIAYTQLDMRDVKRVKDRFGVTINDVVVALCAGALRRFLLEHGVLPEAPLVATVPVSVHDKSDRPGRNQATWMFCRVPSQISDPAQRIRTIAAGNTVAKDHAAAIGPTLLHDWIQFGGSTMFGAAMRILPHISITHSPAYNLILSNVPGPQAQLYFLGCRMDSMFPLGPLLGNAGLNITVMSLNGELGVGIVSCPDLLPDLWGVADGFPEALKELLECSDDQPEGSNHQDS.

The active-site Proton acceptor is His-174.

Belongs to the long-chain O-acyltransferase family.

The catalysed reaction is an acyl-CoA + a 1,2-diacyl-sn-glycerol = a triacyl-sn-glycerol + CoA. The protein operates within glycerolipid metabolism; triacylglycerol biosynthesis. The chain is Putative diacyglycerol O-acyltransferase MT1809 from Mycobacterium tuberculosis (strain CDC 1551 / Oshkosh).